The primary structure comprises 181 residues: MRHNNAGKRLGRTTSHRIAMYRNMVTSFLNHERITTTDAKAKGLRSIAEKMITLGKKGDLNAMRQAASFIRDKKVVTKLFTTIAPRYAERAGGYTRIIKLGIRPGDNAPLSVIELVEETIQAPKAKKKIAAKKPATKVAAKAASATAESAPVATANDAAPAEEAEVQGVKDPAEDCEAKAD.

Residues 141-159 (KAASATAESAPVATANDAA) show a composition bias toward low complexity. Residues 141–181 (KAASATAESAPVATANDAAPAEEAEVQGVKDPAEDCEAKAD) are disordered. Positions 171–181 (DPAEDCEAKAD) are enriched in basic and acidic residues.

Belongs to the bacterial ribosomal protein bL17 family. In terms of assembly, part of the 50S ribosomal subunit. Contacts protein L32.

The sequence is that of Large ribosomal subunit protein bL17 from Geotalea daltonii (strain DSM 22248 / JCM 15807 / FRC-32) (Geobacter daltonii).